The chain runs to 390 residues: S-adenosylmethionine synthase 4 (390 aa).

A Mg(2+)-binding site is contributed by glutamate 9. ATP is bound at residue histidine 15. Glutamate 43 contributes to the K(+) binding site. L-methionine-binding residues include glutamate 56 and glutamine 99. ATP contacts are provided by residues 167–169, 235–238, aspartate 246, 252–253, alanine 269, lysine 273, and lysine 277; these read DGK, SGRF, and RK. Residue aspartate 246 participates in L-methionine binding. An L-methionine-binding site is contributed by lysine 277.

It belongs to the AdoMet synthase family. As to quaternary structure, homotetramer. The cofactor is Mn(2+). Requires Mg(2+) as cofactor. Co(2+) serves as cofactor. It depends on K(+) as a cofactor. Mostly expressed in flowers, seedpods and roots, and, to a lower extent, in stems and leaves.

The protein resides in the cytoplasm. It carries out the reaction L-methionine + ATP + H2O = S-adenosyl-L-methionine + phosphate + diphosphate. It participates in amino-acid biosynthesis; S-adenosyl-L-methionine biosynthesis; S-adenosyl-L-methionine from L-methionine: step 1/1. Catalyzes the formation of S-adenosylmethionine from methionine and ATP. The reaction comprises two steps that are both catalyzed by the same enzyme: formation of S-adenosylmethionine (AdoMet) and triphosphate, and subsequent hydrolysis of the triphosphate. The sequence is that of S-adenosylmethionine synthase 4 (MSAMS4) from Brassica juncea (Indian mustard).